We begin with the raw amino-acid sequence, 271 residues long: Probable short-chain type dehydrogenase/reductase VdlC (271 aa).

1–25 (MAVITGASSGIGLECVLMLLNQGYK) is a binding site for NAD(+). Ser129 is a substrate binding site. Catalysis depends on Tyr142, which acts as the Proton acceptor.

It belongs to the short-chain dehydrogenases/reductases (SDR) family.

The polypeptide is Probable short-chain type dehydrogenase/reductase VdlC (vdlC) (Helicobacter pylori (strain J99 / ATCC 700824) (Campylobacter pylori J99)).